The chain runs to 122 residues: MIQTQTMLEVADNSGARQVMCIKVLGGSHRRYATVGDIIKVTVKEAIPRGKVKKGQVLKAVVVRTRKGVRRPDGSLIRFDGNAAVLLNNQDAPIGTRIFGPVTRELRNEKFMKIISLAPEVL.

This sequence belongs to the universal ribosomal protein uL14 family. In terms of assembly, part of the 50S ribosomal subunit. Forms a cluster with proteins L3 and L19. In the 70S ribosome, L14 and L19 interact and together make contacts with the 16S rRNA in bridges B5 and B8.

Binds to 23S rRNA. Forms part of two intersubunit bridges in the 70S ribosome. The chain is Large ribosomal subunit protein uL14 from Marinobacter nauticus (strain ATCC 700491 / DSM 11845 / VT8) (Marinobacter aquaeolei).